Here is a 290-residue protein sequence, read N- to C-terminus: Short-chain dehydrogenase srdE (290 aa).

NADP(+) is bound by residues I11, T37, D58, and N86. The helical transmembrane segment at 125–145 (LIASSGIIVNIGSIGGVVPFV) threads the bilayer. Y150 contributes to the NADP(+) binding site. Residue Y150 is the Proton donor of the active site. An N-linked (GlcNAc...) asparagine glycan is attached at N151. NADP(+) contacts are provided by K154, V183, and T185. Residue K154 is the Lowers pKa of active site Tyr of the active site.

It belongs to the short-chain dehydrogenases/reductases (SDR) family.

It is found in the membrane. In terms of biological role, short-chain dehydrogenase; part of the gene cluster that mediates the biosynthesis of sordarial, a salicylic aldehyde structurally related to the phytotoxin pyriculol. The most interesting aspect of this pathway is formation of an aromatic product from the highly reducing polyketide synthase srdA. SrdA synthesizes a reduced polyketide chain from one molecule of acetyl-CoA and five molecules of malonyl-CoA. The polyketide chain is then reductively released as an aldehyde. The oxidoreductases srdC, srdD and srdE then oxidize one of the hydroxy groups to facilitate the intramolecular aldol condensation, followed by dehydration to yield a salicylic aldehyde. This aldehyde can undergo facile reduction by endogenous reductases to yield the alcohol 1-hydroxy-2-hydroxymethyl-3-pent-1,3-dienylbenzene. The flavin-dependent srdI counteract against the propensity of the aldehydes to be reduced under physiological conditions and is responsible for reoxidizing 1-hydroxy-2-hydroxymethyl-3-pent-1,3-dienylbenzene back to the salicylic aldehyde. This salicylic aldehyde is then selectively epoxidized by the cupin-domain-containing oxidoreductase srdB to yield the epoxide, which can be hydrolyzed stereoselectively by the hydrolase srdG to give the final product sordarial. This Neurospora crassa (strain ATCC 24698 / 74-OR23-1A / CBS 708.71 / DSM 1257 / FGSC 987) protein is Short-chain dehydrogenase srdE.